Reading from the N-terminus, the 106-residue chain is uncharacterized protein (106 aa).

This sequence belongs to the csb family.

This is an uncharacterized protein from Dictyostelium discoideum (Social amoeba).